We begin with the raw amino-acid sequence, 236 residues long: UPF0280 protein Mlab_0453 (236 aa).

The protein belongs to the UPF0280 family.

This is UPF0280 protein Mlab_0453 from Methanocorpusculum labreanum (strain ATCC 43576 / DSM 4855 / Z).